Consider the following 176-residue polypeptide: NAD(P)H-quinone oxidoreductase subunit 6, chloroplastic (176 aa).

5 consecutive transmembrane segments (helical) span residues 10–30 (FLLV…VLLP), 32–52 (PIFS…LYIL), 61–81 (AQLL…VMFM), 92–112 (LWTV…FSLI), and 152–172 (FFLP…GAIS).

Belongs to the complex I subunit 6 family. In terms of assembly, NDH is composed of at least 16 different subunits, 5 of which are encoded in the nucleus.

Its subcellular location is the plastid. It localises to the chloroplast thylakoid membrane. It catalyses the reaction a plastoquinone + NADH + (n+1) H(+)(in) = a plastoquinol + NAD(+) + n H(+)(out). The enzyme catalyses a plastoquinone + NADPH + (n+1) H(+)(in) = a plastoquinol + NADP(+) + n H(+)(out). NDH shuttles electrons from NAD(P)H:plastoquinone, via FMN and iron-sulfur (Fe-S) centers, to quinones in the photosynthetic chain and possibly in a chloroplast respiratory chain. The immediate electron acceptor for the enzyme in this species is believed to be plastoquinone. Couples the redox reaction to proton translocation, and thus conserves the redox energy in a proton gradient. In Lobularia maritima (Sweet alyssum), this protein is NAD(P)H-quinone oxidoreductase subunit 6, chloroplastic (ndhG).